A 368-amino-acid chain; its full sequence is HECT-type ubiquitin ligase-interacting protein apyA (368 aa).

It belongs to the arrestin family. Interacts with hulA.

Functionally, may be involved in signaling by recognizing appropriately phosphorylated substrates via its arrestin domains and then recruit a HECT-type ubiquitin ligase such as hulA, leading to ubiquitination of the substrate, providing a link between ubiquitination and phosphorylation in protein regulation and stability. This is HECT-type ubiquitin ligase-interacting protein apyA (apyA) from Emericella nidulans (strain FGSC A4 / ATCC 38163 / CBS 112.46 / NRRL 194 / M139) (Aspergillus nidulans).